Reading from the N-terminus, the 296-residue chain is Elongation factor Ts (296 aa).

Residues 79–82 are involved in Mg(2+) ion dislocation from EF-Tu; the sequence is TDFV.

The protein belongs to the EF-Ts family.

The protein resides in the cytoplasm. Functionally, associates with the EF-Tu.GDP complex and induces the exchange of GDP to GTP. It remains bound to the aminoacyl-tRNA.EF-Tu.GTP complex up to the GTP hydrolysis stage on the ribosome. The sequence is that of Elongation factor Ts from Paracoccus denitrificans (strain Pd 1222).